Here is a 74-residue protein sequence, read N- to C-terminus: MAKKESYEDMLGKLQDILSTLEDDNLNLEEGMKSYEDGVKLVNKLYKTLNSYEGKISVIKEEKEVEFENQDGDR.

This sequence belongs to the XseB family. In terms of assembly, heterooligomer composed of large and small subunits.

It localises to the cytoplasm. It carries out the reaction Exonucleolytic cleavage in either 5'- to 3'- or 3'- to 5'-direction to yield nucleoside 5'-phosphates.. Its function is as follows. Bidirectionally degrades single-stranded DNA into large acid-insoluble oligonucleotides, which are then degraded further into small acid-soluble oligonucleotides. This Clostridium botulinum (strain Eklund 17B / Type B) protein is Exodeoxyribonuclease 7 small subunit.